Here is a 318-residue protein sequence, read N- to C-terminus: uncharacterized protein (318 aa).

A run of 2 helical transmembrane segments spans residues 230–250 and 264–284; these read VWTY…SFLI and ASLM…LGVI.

It belongs to the glycosyltransferase 2 family. GtrB subfamily.

The protein resides in the cell membrane. This is an uncharacterized protein from Synechocystis sp. (strain ATCC 27184 / PCC 6803 / Kazusa).